Here is a 1010-residue protein sequence, read N- to C-terminus: Polyhomeotic-like protein 1 (1010 aa).

Low complexity predominate over residues 1 to 22 (METESEQNSSSTNGSSSSGASS). Disordered stretches follow at residues 1–25 (METE…SRPQ), 212–243 (NQQA…LSQT), 259–312 (GQSL…TGVV), 444–506 (QQQG…SKPP), 565–588 (GAVQ…PGAL), and 646–678 (KRKA…SPKV). Residues 212-228 (NQQASAQGPQMPGSTQK) show a composition bias toward polar residues. Positions 279 to 292 (MGPGGGGQAPGGLG) are enriched in gly residues. Pro residues predominate over residues 453-463 (PQPPQVPPTQQ). The span at 464–480 (VPPSQSQQQAQTLVVQP) shows a compositional bias: low complexity. Pro residues predominate over residues 488 to 500 (TLPPEPTSKPPIP). Residues 575 to 587 (ASSPPSSQAAPGA) show a composition bias toward low complexity. S651 carries the phosphoserine modification. K769 is covalently cross-linked (Glycyl lysine isopeptide (Lys-Gly) (interchain with G-Cter in SUMO2)). Positions 772 to 794 (QAGLPTGLNESQPSGPLGGDSPS) are disordered. An FCS-type zinc finger spans residues 797–831 (LEKKANLLKCEYCGKYAPAEQFRGSKRFCSMTCAK). Zn(2+)-binding residues include C806, C809, C825, and C829. The disordered stretch occupies residues 854 to 928 (ASYARVRRRG…LGNTITTPST (75 aa)). Phosphoserine is present on S904. At T928 the chain carries Phosphothreonine. In terms of domain architecture, SAM spans 946-1010 (WSVEEVYEFI…CAKINVLKET (65 aa)).

In terms of assembly, homodimer. Component of a PRC1-like complex. Interacts with the SAM domain of SCMH1 via its SAM domain in vitro. Interacts with RNF2 and CBX7. Interacts with PHC2. Interacts with BMI1. As to expression, highly expressed in testis with lower levels in most other tissues. Expressed in embryonic stem cells.

It localises to the nucleus. Functionally, component of a Polycomb group (PcG) multiprotein PRC1-like complex, a complex class required to maintain the transcriptionally repressive state of many genes, including Hox genes, throughout development. PcG PRC1 complex acts via chromatin remodeling and modification of histones; it mediates monoubiquitination of histone H2A 'Lys-119', rendering chromatin heritably changed in its expressibility. Required for proper control of cellular levels of GMNN expression. This is Polyhomeotic-like protein 1 from Mus musculus (Mouse).